Consider the following 152-residue polypeptide: Mitochondrial holo-[acyl-carrier-protein] synthase (152 aa).

This sequence belongs to the P-Pant transferase superfamily. AcpS family.

It localises to the mitochondrion. The catalysed reaction is apo-[ACP] + CoA = holo-[ACP] + adenosine 3',5'-bisphosphate + H(+). Its function is as follows. Transfers the 4'-phosphopantetheine moiety from coenzyme A to a Ser of mitochondrial acyl-carrier-protein. The sequence is that of Mitochondrial holo-[acyl-carrier-protein] synthase (PPT2) from Candida glabrata (strain ATCC 2001 / BCRC 20586 / JCM 3761 / NBRC 0622 / NRRL Y-65 / CBS 138) (Yeast).